Consider the following 292-residue polypeptide: Sulfofructosephosphate aldolase (292 aa).

Lysine 193 (schiff-base intermediate with substrate) is an active-site residue.

The protein belongs to the aldolase LacD family. Homotetramer.

The enzyme catalyses 6-deoxy-6-sulfo-D-fructose 1-phosphate = (2S)-3-sulfolactaldehyde + dihydroxyacetone phosphate. Functionally, cleaves 6-deoxy-6-sulfo-D-fructose 1-phosphate (SFP) to form dihydroxyacetone phosphate (DHAP) and 3-sulfolactaldehyde (SLA). The sequence is that of Sulfofructosephosphate aldolase (yihT) from Salmonella typhi.